Consider the following 262-residue polypeptide: 3-deoxy-manno-octulosonate cytidylyltransferase (262 aa).

Belongs to the KdsB family.

Its subcellular location is the cytoplasm. The catalysed reaction is 3-deoxy-alpha-D-manno-oct-2-ulosonate + CTP = CMP-3-deoxy-beta-D-manno-octulosonate + diphosphate. It functions in the pathway nucleotide-sugar biosynthesis; CMP-3-deoxy-D-manno-octulosonate biosynthesis; CMP-3-deoxy-D-manno-octulosonate from 3-deoxy-D-manno-octulosonate and CTP: step 1/1. The protein operates within bacterial outer membrane biogenesis; lipopolysaccharide biosynthesis. In terms of biological role, activates KDO (a required 8-carbon sugar) for incorporation into bacterial lipopolysaccharide in Gram-negative bacteria. This Acidovorax ebreus (strain TPSY) (Diaphorobacter sp. (strain TPSY)) protein is 3-deoxy-manno-octulosonate cytidylyltransferase.